The chain runs to 203 residues: Probable nicotinate-nucleotide adenylyltransferase (203 aa).

Belongs to the NadD family.

It catalyses the reaction nicotinate beta-D-ribonucleotide + ATP + H(+) = deamido-NAD(+) + diphosphate. It participates in cofactor biosynthesis; NAD(+) biosynthesis; deamido-NAD(+) from nicotinate D-ribonucleotide: step 1/1. Functionally, catalyzes the reversible adenylation of nicotinate mononucleotide (NaMN) to nicotinic acid adenine dinucleotide (NaAD). The chain is Probable nicotinate-nucleotide adenylyltransferase from Prosthecochloris aestuarii (strain DSM 271 / SK 413).